The sequence spans 256 residues: Protein RGF1 INDUCIBLE TRANSCRIPTION FACTOR 1 (256 aa).

The B box-type zinc-finger motif lies at C21–V59.

In terms of tissue distribution, expressed predominantly in root meristematic zones.

The protein resides in the nucleus. Probable transcription factor that plays a central role in mediating RGF1 hormone peptide signaling leading to the production of reactive oxygen species (ROS) in roots to modulate meristem size and root growth, probably via oxidative post-translational modification of the transcription factor PLETHORA (e.g. PLT1 and PLT2). The protein is Protein RGF1 INDUCIBLE TRANSCRIPTION FACTOR 1 of Arabidopsis thaliana (Mouse-ear cress).